Consider the following 147-residue polypeptide: MERTFVYLKPNAVRRGLVGEIIKRFEQRGIKIVALKLLWMSKQQAEKLYEMHKGKSFYNDLIDFVTGGPIVAMIVEAPRVIEMVRHIIGDTDPLKAGTGTIRGEFALTITKNLIHASDSKENFEREYKIFFSDDEIIDYYLDVQDDI.

Positions 9, 57, 85, 91, 102, and 112 each coordinate ATP. The active-site Pros-phosphohistidine intermediate is histidine 115.

This sequence belongs to the NDK family. As to quaternary structure, homotetramer. Requires Mg(2+) as cofactor.

Its subcellular location is the cytoplasm. It carries out the reaction a 2'-deoxyribonucleoside 5'-diphosphate + ATP = a 2'-deoxyribonucleoside 5'-triphosphate + ADP. The enzyme catalyses a ribonucleoside 5'-diphosphate + ATP = a ribonucleoside 5'-triphosphate + ADP. Major role in the synthesis of nucleoside triphosphates other than ATP. The ATP gamma phosphate is transferred to the NDP beta phosphate via a ping-pong mechanism, using a phosphorylated active-site intermediate. The chain is Nucleoside diphosphate kinase from Thermosipho africanus (strain TCF52B).